A 701-amino-acid chain; its full sequence is DNA ligase (701 aa).

NAD(+) contacts are provided by residues 50-54, 99-100, and Glu130; these read DYEYD and SL. Lys132 acts as the N6-AMP-lysine intermediate in catalysis. NAD(+)-binding residues include Arg153, Glu187, Lys301, and Lys325. The Zn(2+) site is built by Cys419, Cys422, Cys437, and Cys442. The region spanning 626 to 701 is the BRCT domain; the sequence is NEHQKYMNKT…EIITEPFWDN (76 aa).

It belongs to the NAD-dependent DNA ligase family. LigA subfamily. It depends on Mg(2+) as a cofactor. Requires Mn(2+) as cofactor.

The catalysed reaction is NAD(+) + (deoxyribonucleotide)n-3'-hydroxyl + 5'-phospho-(deoxyribonucleotide)m = (deoxyribonucleotide)n+m + AMP + beta-nicotinamide D-nucleotide.. Its function is as follows. DNA ligase that catalyzes the formation of phosphodiester linkages between 5'-phosphoryl and 3'-hydroxyl groups in double-stranded DNA using NAD as a coenzyme and as the energy source for the reaction. It is essential for DNA replication and repair of damaged DNA. In Malacoplasma penetrans (strain HF-2) (Mycoplasma penetrans), this protein is DNA ligase.